A 428-amino-acid polypeptide reads, in one-letter code: Adenylosuccinate synthetase (428 aa).

GTP-binding positions include 12-18 (GDEGKGK) and 40-42 (GHT). The active-site Proton acceptor is Asp-13. Mg(2+) is bound by residues Asp-13 and Gly-40. IMP-binding positions include 13-16 (DEGK), 38-41 (NAGH), Thr-128, Arg-142, Gln-223, Thr-238, and Arg-302. Residue His-41 is the Proton donor of the active site. A substrate-binding site is contributed by 298–304 (TTTGRPR). Residues Arg-304, 330 to 332 (SID), and 412 to 414 (SVG) contribute to the GTP site.

Belongs to the adenylosuccinate synthetase family. As to quaternary structure, homodimer. Mg(2+) is required as a cofactor.

It is found in the cytoplasm. The catalysed reaction is IMP + L-aspartate + GTP = N(6)-(1,2-dicarboxyethyl)-AMP + GDP + phosphate + 2 H(+). Its pathway is purine metabolism; AMP biosynthesis via de novo pathway; AMP from IMP: step 1/2. Functionally, plays an important role in the de novo pathway of purine nucleotide biosynthesis. Catalyzes the first committed step in the biosynthesis of AMP from IMP. This is Adenylosuccinate synthetase from Geobacillus kaustophilus (strain HTA426).